We begin with the raw amino-acid sequence, 205 residues long: Anaerobic dimethyl sulfoxide reductase chain B (205 aa).

4Fe-4S ferredoxin-type domains are found at residues 5–33, 59–89, and 90–119; these read YGFF…LTPE, FAYY…KRED, and GFVV…YNET. [4Fe-4S] cluster-binding residues include Cys-14, Cys-17, Cys-20, Cys-24, Cys-67, Cys-70, Cys-75, Cys-79, Cys-99, Cys-102, Cys-105, Cys-109, Cys-126, Cys-129, Cys-141, and Cys-145. The segment at 184–205 is disordered; the sequence is KPNANSRPTGDTTGYLANPKEV. A compositionally biased stretch (polar residues) spans 186–195; the sequence is NANSRPTGDT.

Heterotrimeric enzyme composed of a catalytic heterodimer (DmsAB) and a membrane anchor protein (DmsC). [4Fe-4S] cluster is required as a cofactor.

Electron transfer subunit of the terminal reductase during anaerobic growth on various sulfoxide and N-oxide compounds. This chain is Anaerobic dimethyl sulfoxide reductase chain B (dmsB), found in Shigella flexneri.